A 567-amino-acid polypeptide reads, in one-letter code: Zinc finger protein 512 (567 aa).

The interval 1-32 (MSSRLGAVPATSGPTTFKQQRSTRIVGAKNSR) is disordered. The segment covering 12 to 23 (SGPTTFKQQRST) has biased composition (polar residues). Residues lysine 18 and lysine 84 each participate in a glycyl lysine isopeptide (Lys-Gly) (interchain with G-Cter in SUMO2) cross-link. Residues 86-148 (AATSHVEGSG…QARRIRKEPP (63 aa)) form a disordered region. A compositionally biased stretch (basic residues) spans 119–130 (KKHKLYGRKQRP). A C2H2-type 1 zinc finger spans residues 197–220 (FTCHHCGKQLRSLAGMKYHVMANH). Lysine 227 is covalently cross-linked (Glycyl lysine isopeptide (Lys-Gly) (interchain with G-Cter in SUMO2)). A C2H2-type 2 zinc finger spans residues 287 to 310 (LKCHHCGKPYRSKAGLAYHLRSEH). A Glycyl lysine isopeptide (Lys-Gly) (interchain with G-Cter in SUMO2) cross-link involves residue lysine 333. Residues 406–430 (IQCPNQGCEAVYSSVSGLKAHLGSC) form a C2H2-type 3; atypical zinc finger. Residues 440–463 (YKCLLCQKEFVSESGVKYHINSVH) form a C2H2-type 4 zinc finger. The segment at 486 to 567 (QRQQEEEKRR…PKTNHKRGRK (82 aa)) is disordered. Residues 495–508 (RQQHRSRRSLRRRQ) are compositionally biased toward basic residues. The span at 523–532 (VGKDQRRNNE) shows a compositional bias: basic and acidic residues. Over residues 556 to 567 (KPPKTNHKRGRK) the composition is skewed to basic residues.

This sequence belongs to the krueppel C2H2-type zinc-finger protein family.

The protein resides in the nucleus. May be involved in transcriptional regulation. In Pongo abelii (Sumatran orangutan), this protein is Zinc finger protein 512 (ZNF512).